A 120-amino-acid chain; its full sequence is UPF0231 protein YacL (120 aa).

The protein belongs to the UPF0231 family.

This Escherichia coli O6:K15:H31 (strain 536 / UPEC) protein is UPF0231 protein YacL.